The primary structure comprises 735 residues: Nuclear intron maturase 2, mitochondrial (735 aa).

The N-terminal 12 residues, 1–12 (MRRSFSVLGPYK), are a transit peptide targeting the mitochondrion. The Reverse transcriptase domain maps to 161 to 460 (RDKTDYESLS…KGIMFLDHVL (300 aa)). Residues 485–653 (GTLLSVTASL…KFLIEYLTLD (169 aa)) form an intron maturase type-2 region. Residues 707–735 (SSTYNRDNDDQKNKEEDEDSEDGLRIARM) form a disordered region. Basic and acidic residues predominate over residues 712 to 721 (RDNDDQKNKE).

This sequence belongs to the plant nuclear intron maturase (nMat) family. In terms of assembly, associated to a large ribonucleoprotein complex in mitochondria containing group-II intron RNAs.

It localises to the mitochondrion. Nuclear-encoded maturase required for splicing of group-II introns in mitochondria. Involved in the splicing of mitochondrial COX2, NAD1 and NAD7 transcripts. Necessary for mitochondrial biogenesis during early developmental stages. This is Nuclear intron maturase 2, mitochondrial from Arabidopsis thaliana (Mouse-ear cress).